The sequence spans 336 residues: Phytochrome A-associated F-box protein (336 aa).

Residues E3 to I55 enclose the F-box domain. A Nuclear localization signal motif is present at residues R197–K201.

As to quaternary structure, probable component of an E3 ubiquitin ligase SCF complex. Interacts with SKP1A/ASK1 and SKP1B/ASK2.

It is found in the nucleus. Its pathway is protein modification; protein ubiquitination. Its function is as follows. Component of SCF(ASK-cullin-F-box) E3 ubiquitin ligase complexes, which may mediate the ubiquitination and subsequent proteasomal degradation of target proteins. Negative regulator of the phyA signaling pathway that shifts the responsiveness of the phyA signaling system associated with hypocotyl elongation from red to far-red wavelength. This chain is Phytochrome A-associated F-box protein (EID1), found in Arabidopsis thaliana (Mouse-ear cress).